A 243-amino-acid chain; its full sequence is Ubiquinone/menaquinone biosynthesis C-methyltransferase UbiE (243 aa).

S-adenosyl-L-methionine-binding positions include T69, D90, and D116 to A117.

The protein belongs to the class I-like SAM-binding methyltransferase superfamily. MenG/UbiE family.

The enzyme catalyses a 2-demethylmenaquinol + S-adenosyl-L-methionine = a menaquinol + S-adenosyl-L-homocysteine + H(+). It catalyses the reaction a 2-methoxy-6-(all-trans-polyprenyl)benzene-1,4-diol + S-adenosyl-L-methionine = a 5-methoxy-2-methyl-3-(all-trans-polyprenyl)benzene-1,4-diol + S-adenosyl-L-homocysteine + H(+). The protein operates within quinol/quinone metabolism; menaquinone biosynthesis; menaquinol from 1,4-dihydroxy-2-naphthoate: step 2/2. Its pathway is cofactor biosynthesis; ubiquinone biosynthesis. Functionally, methyltransferase required for the conversion of demethylmenaquinol (DMKH2) to menaquinol (MKH2) and the conversion of 2-polyprenyl-6-methoxy-1,4-benzoquinol (DDMQH2) to 2-polyprenyl-3-methyl-6-methoxy-1,4-benzoquinol (DMQH2). This chain is Ubiquinone/menaquinone biosynthesis C-methyltransferase UbiE, found in Paraburkholderia phymatum (strain DSM 17167 / CIP 108236 / LMG 21445 / STM815) (Burkholderia phymatum).